We begin with the raw amino-acid sequence, 229 residues long: GTP cyclohydrolase 1 (229 aa).

The segment at 1–21 (MTLAKPGSGSQSRMDDKAHFK) is disordered. Positions 116, 119, and 187 each coordinate Zn(2+).

The protein belongs to the GTP cyclohydrolase I family. As to quaternary structure, toroid-shaped homodecamer, composed of two pentamers of five dimers.

It catalyses the reaction GTP + H2O = 7,8-dihydroneopterin 3'-triphosphate + formate + H(+). Its pathway is cofactor biosynthesis; 7,8-dihydroneopterin triphosphate biosynthesis; 7,8-dihydroneopterin triphosphate from GTP: step 1/1. The chain is GTP cyclohydrolase 1 from Synechococcus sp. (strain JA-2-3B'a(2-13)) (Cyanobacteria bacterium Yellowstone B-Prime).